The primary structure comprises 213 residues: 3,4-dihydroxy-2-butanone 4-phosphate synthase (213 aa).

D-ribulose 5-phosphate-binding positions include 37 to 38, Asp42, 150 to 154, and Glu174; these read RE and RPGHT. Position 38 (Glu38) interacts with Mg(2+). A Mg(2+)-binding site is contributed by His153.

It belongs to the DHBP synthase family. In terms of assembly, homodimer. Mg(2+) is required as a cofactor. The cofactor is Mn(2+).

The catalysed reaction is D-ribulose 5-phosphate = (2S)-2-hydroxy-3-oxobutyl phosphate + formate + H(+). The protein operates within cofactor biosynthesis; riboflavin biosynthesis; 2-hydroxy-3-oxobutyl phosphate from D-ribulose 5-phosphate: step 1/1. Its function is as follows. Catalyzes the conversion of D-ribulose 5-phosphate to formate and 3,4-dihydroxy-2-butanone 4-phosphate. The chain is 3,4-dihydroxy-2-butanone 4-phosphate synthase from Clostridium botulinum (strain ATCC 19397 / Type A).